A 152-amino-acid chain; its full sequence is Ribosome maturation factor RimP (152 aa).

The protein belongs to the RimP family.

The protein resides in the cytoplasm. Functionally, required for maturation of 30S ribosomal subunits. The protein is Ribosome maturation factor RimP of Pectobacterium atrosepticum (strain SCRI 1043 / ATCC BAA-672) (Erwinia carotovora subsp. atroseptica).